The chain runs to 504 residues: WD repeat-containing protein 55 homolog (504 aa).

Disordered regions lie at residues Met-1 to Asp-21 and Gln-33 to Asp-132. 2 stretches are compositionally biased toward acidic residues: residues Asn-12 to Asp-21 and Gln-33 to Leu-48. Low complexity predominate over residues Ser-63 to Ser-74. The segment covering Asn-78–Ile-89 has biased composition (acidic residues). WD repeat units lie at residues Lys-156–Leu-195, Val-200–Leu-239, Ala-243–Glu-281, Glu-284–Gln-323, Pro-326–Asp-365, and Gln-410–Asp-449. A disordered region spans residues Phe-477–Thr-504.

This sequence belongs to the WD repeat WDR55 family.

The polypeptide is WD repeat-containing protein 55 homolog (Drosophila virilis (Fruit fly)).